Here is a 426-residue protein sequence, read N- to C-terminus: Serine--tRNA ligase (426 aa).

L-serine is bound at residue 227 to 229 (TSE). ATP is bound by residues 258 to 260 (RKE) and V274. E281 contributes to the L-serine binding site. 345–348 (ELTS) is a binding site for ATP. L-serine is bound at residue T380.

This sequence belongs to the class-II aminoacyl-tRNA synthetase family. Type-1 seryl-tRNA synthetase subfamily. In terms of assembly, homodimer. The tRNA molecule binds across the dimer.

The protein resides in the cytoplasm. The enzyme catalyses tRNA(Ser) + L-serine + ATP = L-seryl-tRNA(Ser) + AMP + diphosphate + H(+). It carries out the reaction tRNA(Sec) + L-serine + ATP = L-seryl-tRNA(Sec) + AMP + diphosphate + H(+). It functions in the pathway aminoacyl-tRNA biosynthesis; selenocysteinyl-tRNA(Sec) biosynthesis; L-seryl-tRNA(Sec) from L-serine and tRNA(Sec): step 1/1. Catalyzes the attachment of serine to tRNA(Ser). Is also able to aminoacylate tRNA(Sec) with serine, to form the misacylated tRNA L-seryl-tRNA(Sec), which will be further converted into selenocysteinyl-tRNA(Sec). The chain is Serine--tRNA ligase from Clavibacter sepedonicus (Clavibacter michiganensis subsp. sepedonicus).